Reading from the N-terminus, the 747-residue chain is Catalase-peroxidase 1 (747 aa).

Residues 1–22 (MTDTSDARPPHSDDKTRSHSES) are compositionally biased toward basic and acidic residues. The disordered stretch occupies residues 1–39 (MTDTSDARPPHSDDKTRSHSESENPAIDSPEPKVHAPLT). The segment at residues 112–240 (WHAAGTYRIF…FGATTMGLIY (129 aa)) is a cross-link (tryptophyl-tyrosyl-methioninium (Trp-Tyr) (with M-266)). The Proton acceptor role is filled by His113. The tryptophyl-tyrosyl-methioninium (Tyr-Met) (with W-112) cross-link spans 240-266 (YVNPEGPEGKPDPLAAAHDIRETFGRM). His281 contributes to the heme b binding site.

This sequence belongs to the peroxidase family. Peroxidase/catalase subfamily. In terms of assembly, homodimer or homotetramer. It depends on heme b as a cofactor. In terms of processing, formation of the three residue Trp-Tyr-Met cross-link is important for the catalase, but not the peroxidase activity of the enzyme.

The enzyme catalyses H2O2 + AH2 = A + 2 H2O. The catalysed reaction is 2 H2O2 = O2 + 2 H2O. Bifunctional enzyme with both catalase and broad-spectrum peroxidase activity. This Mycolicibacterium vanbaalenii (strain DSM 7251 / JCM 13017 / BCRC 16820 / KCTC 9966 / NRRL B-24157 / PYR-1) (Mycobacterium vanbaalenii) protein is Catalase-peroxidase 1.